Here is a 337-residue protein sequence, read N- to C-terminus: Phosphatidate cytidylyltransferase, mitochondrial (337 aa).

Belongs to the TAM41 family. It depends on Mg(2+) as a cofactor. As to expression, brain and liver.

It is found in the mitochondrion inner membrane. The catalysed reaction is a 1,2-diacyl-sn-glycero-3-phosphate + CTP + H(+) = a CDP-1,2-diacyl-sn-glycerol + diphosphate. The protein operates within phospholipid metabolism; CDP-diacylglycerol biosynthesis; CDP-diacylglycerol from sn-glycerol 3-phosphate: step 3/3. In terms of biological role, catalyzes the conversion of phosphatidic acid (PA) to CDP-diacylglycerol (CDP-DAG), an essential intermediate in the synthesis of phosphatidylglycerol, cardiolipin and phosphatidylinositol. In Rattus norvegicus (Rat), this protein is Phosphatidate cytidylyltransferase, mitochondrial (Tamm41).